Consider the following 117-residue polypeptide: Iron-sulfur cluster insertion protein ErpA (117 aa).

Iron-sulfur cluster contacts are provided by Cys45, Cys109, and Cys111.

This sequence belongs to the HesB/IscA family. As to quaternary structure, homodimer. Iron-sulfur cluster is required as a cofactor.

In terms of biological role, required for insertion of 4Fe-4S clusters for at least IspG. This chain is Iron-sulfur cluster insertion protein ErpA, found in Ruthia magnifica subsp. Calyptogena magnifica.